The primary structure comprises 533 residues: Probable DNA ligase (533 aa).

Glu211 contributes to the ATP binding site. Lys213 (N6-AMP-lysine intermediate) is an active-site residue. Positions 218, 233, 262, 302, 374, and 380 each coordinate ATP. Residues 512–533 are disordered; the sequence is LAGEAAEKGQAEGGGEELEDDG.

It belongs to the ATP-dependent DNA ligase family. Requires Mg(2+) as cofactor.

It carries out the reaction ATP + (deoxyribonucleotide)n-3'-hydroxyl + 5'-phospho-(deoxyribonucleotide)m = (deoxyribonucleotide)n+m + AMP + diphosphate.. DNA ligase that seals nicks in double-stranded DNA during DNA replication, DNA recombination and DNA repair. This is Probable DNA ligase from Sorangium cellulosum (strain So ce56) (Polyangium cellulosum (strain So ce56)).